The primary structure comprises 208 residues: FMRFamide-like neuropeptide 18 (208 aa).

A signal peptide spans 1–21; it reads MQRWSGVLLISLCCLLRGALA. Residues 22–83 constitute a propeptide that is removed on maturation; the sequence is YTEPIYEIVE…VWEKRESSVQ (62 aa). Phe93 is subject to Phenylalanine amide. Residues 97–101 constitute a propeptide that is removed on maturation; that stretch reads AYFDE. Phe111 is modified (phenylalanine amide). Residues 115–119 constitute a propeptide that is removed on maturation; sequence SYFDE. At Phe129 the chain carries Phenylalanine amide. Residues 133 to 137 constitute a propeptide that is removed on maturation; that stretch reads DVPMD. Phe147 is subject to Phenylalanine amide. Positions 151–158 are excised as a propeptide; it reads DYMADSFD. Phenylalanine amide is present on residues Phe169 and Phe180. Residues 184 to 195 constitute a propeptide that is removed on maturation; it reads SDLEEHYAGVLL. Position 205 is a phenylalanine amide (Phe205).

The protein belongs to the FARP (FMRFamide related peptide) family. May be processed by convertase egl-3. As to expression, expressed in head neurons and weakly in ventral nerve cord. Expressed in the interneurons AVA, AIY and RIG, the motor neuron RIM and the pharyngeal neurons M2 and M3. EMPGVLRF-amide: Expressed in cholinergic pharyngeal motoneurons M2 and M3.

It localises to the secreted. FMRFamide-like neuropeptides. Ligand to G-protein coupled receptor npr-1. Involved in modulating locomotion quiescence during the sleep-like state called lethargus which occurs during molting between larval and adult stages, acting via npr-1. Together with flp-1, plays a homeostatic role by acting on the GABAergic neural transmission at neuromuscular junctions to prevent overexcitation of the locomotor circuit. Plays a role in the navigational capacity of sperm and the targeting of sperm derived from males to the fertilization site in the uterus of hermaphrodites. In terms of biological role, SVPGVLRF-amide: Excites muscle tension. Its function is as follows. Activates the G-protein coupled receptor npr-1 more effectively than other flp-18 peptides. Inhibits the activity of dissected pharyngeal myogenic muscle system. This Caenorhabditis elegans protein is FMRFamide-like neuropeptide 18.